A 226-amino-acid chain; its full sequence is UPF0177 protein YbdJ (226 aa).

5 helical membrane passes run 16 to 36, 43 to 63, 81 to 101, 169 to 189, and 206 to 226; these read LLLL…LGIF, FAFN…IVIA, LLFI…AHHL, FAWV…ISLV, and LHSS…FWVF.

Belongs to the UPF0177 family.

Its subcellular location is the cell membrane. In Lactococcus lactis subsp. lactis (strain IL1403) (Streptococcus lactis), this protein is UPF0177 protein YbdJ (ybdJ).